We begin with the raw amino-acid sequence, 388 residues long: DNA replication and repair protein RecF (388 aa).

30-37 (GANGNGKT) serves as a coordination point for ATP.

This sequence belongs to the RecF family.

The protein localises to the cytoplasm. In terms of biological role, the RecF protein is involved in DNA metabolism; it is required for DNA replication and normal SOS inducibility. RecF binds preferentially to single-stranded, linear DNA. It also seems to bind ATP. The chain is DNA replication and repair protein RecF from Nocardia farcinica (strain IFM 10152).